The following is a 214-amino-acid chain: Uridine kinase (214 aa).

Residue 15–22 participates in ATP binding; that stretch reads GASASGKS.

The protein belongs to the uridine kinase family.

Its subcellular location is the cytoplasm. It catalyses the reaction uridine + ATP = UMP + ADP + H(+). It carries out the reaction cytidine + ATP = CMP + ADP + H(+). It participates in pyrimidine metabolism; CTP biosynthesis via salvage pathway; CTP from cytidine: step 1/3. Its pathway is pyrimidine metabolism; UMP biosynthesis via salvage pathway; UMP from uridine: step 1/1. In Tolumonas auensis (strain DSM 9187 / NBRC 110442 / TA 4), this protein is Uridine kinase.